Consider the following 179-residue polypeptide: Coiled-coil domain-containing protein 32 (179 aa).

The disordered stretch occupies residues 36–65 (DNAFSDSFMDSHPAGESHTAAADSAVQPAG). Positions 75-98 (EVYLASLEKKLRRIKGLNEEVTSK) form a coiled coil. Positions 158 to 179 (LIPPESQAEKPEAGDKPAAAEQ) are disordered.

Interacts with AP2S1; the interaction is direct and mediates association with adaptor protein complex 2 (AP-2).

The protein resides in the membrane. The protein localises to the coated pit. Its function is as follows. Regulates clathrin-mediated endocytsois of cargos such as transferrin probably through the association and modulation of adaptor protein complex 2 (AP-2). Has a role in ciliogenesis. Required for proper cephalic and left/right axis development. The chain is Coiled-coil domain-containing protein 32 (Ccdc32) from Mus musculus (Mouse).